A 189-amino-acid chain; its full sequence is Ribosome-recycling factor (189 aa).

The protein belongs to the RRF family.

It localises to the cytoplasm. Responsible for the release of ribosomes from messenger RNA at the termination of protein biosynthesis. May increase the efficiency of translation by recycling ribosomes from one round of translation to another. The sequence is that of Ribosome-recycling factor from Salinibacter ruber (strain DSM 13855 / M31).